The following is a 233-amino-acid chain: MRLTAQVINEAPEILNPEGKLTLLLRDLQITELENLAITQNKYQVIDLSNNDLISLGNIPKRFNNLQCLLLSNNNISYIDDESFPSDNHITSITLFNNNIYQFQKSFKDKFPKLETLILLGNPITEMENYRYFIIWLIPSLKVLDFKKVKQAERKTSEDMFGTNRDEFNSLAQQMFKNENTEIKLDGKSDRQVKNFVKKMTDEERQQLLKKLETATSIEEIERIENDLKEGAV.

LRR repeat units lie at residues 20 to 40, 42 to 63, 65 to 86, and 89 to 110; these read KLTLLLRDLQITELENLAITQ, KYQVIDLSNNDLISLGNIPKRF, NLQCLLLSNNNISYIDDESFPS, and HITSITLFNNNIYQFQKSFKDK. The region spanning 122 to 160 is the LRRCT domain; the sequence is NPITEMENYRYFIIWLIPSLKVLDFKKVKQAERKTSEDM.

This sequence belongs to the U2 small nuclear ribonucleoprotein A family. As to quaternary structure, associated with the spliceosome.

It is found in the nucleus. Its function is as follows. Involved in pre-mRNA splicing. This chain is U2 small nuclear ribonucleoprotein A' (LEA1), found in Candida albicans (strain SC5314 / ATCC MYA-2876) (Yeast).